Reading from the N-terminus, the 382-residue chain is Pyrimidine monooxygenase RutA (382 aa).

Residues 68–69 (IK), asparagine 134, glutamate 143, 159–160 (RY), and serine 209 each bind FMN.

The protein belongs to the NtaA/SnaA/DszA monooxygenase family. RutA subfamily.

It carries out the reaction uracil + FMNH2 + NADH + O2 = (Z)-3-ureidoacrylate + FMN + NAD(+) + H2O + H(+). The enzyme catalyses thymine + FMNH2 + NADH + O2 = (Z)-2-methylureidoacrylate + FMN + NAD(+) + H2O + H(+). In terms of biological role, catalyzes the pyrimidine ring opening between N-3 and C-4 by an unusual flavin hydroperoxide-catalyzed mechanism, adding oxygen atoms in the process to yield ureidoacrylate peracid, that immediately reacts with FMN forming ureidoacrylate and FMN-N(5)-oxide. The FMN-N(5)-oxide reacts spontaneously with NADH to produce FMN. Requires the flavin reductase RutF to regenerate FMN in vivo. In Escherichia coli (strain K12 / MC4100 / BW2952), this protein is Pyrimidine monooxygenase RutA.